Reading from the N-terminus, the 588-residue chain is Ribonuclease Y (588 aa).

A helical membrane pass occupies residues 7–27 (VLLVAVLLLALIVLGAVLVGV). Positions 130-162 (ARRSGEREAAVLATTTREQAAEVERRAARMDDR) are disordered. Residues 148-162 (QAAEVERRAARMDDR) show a composition bias toward basic and acidic residues. One can recognise a KH domain in the interval 278–359 (VVSVLHLPGD…HRIEEVHDLA (82 aa)). In terms of domain architecture, HD spans 404–497 (VLKHLVETAH…TQASDACSGG (94 aa)).

This sequence belongs to the RNase Y family.

The protein resides in the cell membrane. Endoribonuclease that initiates mRNA decay. The chain is Ribonuclease Y from Salinispora arenicola (strain CNS-205).